The primary structure comprises 423 residues: UPF0229 protein VV2350 (423 aa).

The interval 81–111 is disordered; it reads QFITGDKIERPKGGQGGGGAGDGDASADGEG. Residues 93–102 are compositionally biased toward gly residues; that stretch reads GGQGGGGAGD.

The protein belongs to the UPF0229 family.

The sequence is that of UPF0229 protein VV2350 from Vibrio vulnificus (strain YJ016).